A 247-amino-acid chain; its full sequence is GTP cyclohydrolase 1 type 2 homolog (247 aa).

Residues H63, H64, D101, H215, and E219 each coordinate a divalent metal cation.

It belongs to the GTP cyclohydrolase I type 2/NIF3 family. Toroid-shaped homohexamer. In the hexamer, 3 dimers assemble to form a ring-like structure surrounding a central hole.

Its function is as follows. Provides significant protection from radiation damage and may be involved in the degradation of radiation-damaged nucleotides. The chain is GTP cyclohydrolase 1 type 2 homolog (ybgI) from Escherichia coli O157:H7.